A 439-amino-acid polypeptide reads, in one-letter code: Ribosomal protein uS12 methylthiotransferase RimO (439 aa).

The 116-residue stretch at 3–118 (KKFYITTLGC…AGKILREKFP (116 aa)) folds into the MTTase N-terminal domain. Residues C12, C48, C81, C157, C161, and C164 each coordinate [4Fe-4S] cluster. Positions 143-370 (NYSKPYAYVK…RDVHLAILEE (228 aa)) constitute a Radical SAM core domain. The 66-residue stretch at 373 to 438 (ESRIGQTYDA…EYDMNGTWIS (66 aa)) folds into the TRAM domain.

It belongs to the methylthiotransferase family. RimO subfamily. [4Fe-4S] cluster serves as cofactor.

It localises to the cytoplasm. The catalysed reaction is L-aspartate(89)-[ribosomal protein uS12]-hydrogen + (sulfur carrier)-SH + AH2 + 2 S-adenosyl-L-methionine = 3-methylsulfanyl-L-aspartate(89)-[ribosomal protein uS12]-hydrogen + (sulfur carrier)-H + 5'-deoxyadenosine + L-methionine + A + S-adenosyl-L-homocysteine + 2 H(+). In terms of biological role, catalyzes the methylthiolation of an aspartic acid residue of ribosomal protein uS12. This chain is Ribosomal protein uS12 methylthiotransferase RimO, found in Leptospira borgpetersenii serovar Hardjo-bovis (strain JB197).